Consider the following 646-residue polypeptide: Cytochrome b translation regulator cbp8 (646 aa).

Component of a complex, at least composed of cbp7 and cbp8.

The protein resides in the mitochondrion. Translation factor for cob1/cytochrome b; plays a role in cob1 mRNA stabilization and required for correct folding of the protein. This is Cytochrome b translation regulator cbp8 from Schizosaccharomyces pombe (strain 972 / ATCC 24843) (Fission yeast).